The following is a 145-amino-acid chain: AP-2 complex subunit sigma (145 aa).

Belongs to the adaptor complexes small subunit family. Adaptor protein complex 2 (AP-2) is a heterotetramer composed of two large adaptins (alpha-type subunit apl3 and beta-type subunit apl1), a medium chain (mu-type subunit apm4) and a small adaptin (sigma-type subunit aps2).

The protein localises to the cell membrane. It localises to the membrane. Its subcellular location is the coated pit. Component of the adaptor complexes which link clathrin to receptors in coated vesicles. Clathrin-associated protein complexes are believed to interact with the cytoplasmic tails of membrane proteins, leading to their selection and concentration. This Aspergillus fumigatus (strain ATCC MYA-4609 / CBS 101355 / FGSC A1100 / Af293) (Neosartorya fumigata) protein is AP-2 complex subunit sigma (aps2).